A 199-amino-acid polypeptide reads, in one-letter code: 3-isopropylmalate dehydratase small subunit (199 aa).

The protein belongs to the LeuD family. LeuD type 1 subfamily. In terms of assembly, heterodimer of LeuC and LeuD.

The catalysed reaction is (2R,3S)-3-isopropylmalate = (2S)-2-isopropylmalate. Its pathway is amino-acid biosynthesis; L-leucine biosynthesis; L-leucine from 3-methyl-2-oxobutanoate: step 2/4. In terms of biological role, catalyzes the isomerization between 2-isopropylmalate and 3-isopropylmalate, via the formation of 2-isopropylmaleate. This chain is 3-isopropylmalate dehydratase small subunit, found in Aeromonas hydrophila subsp. hydrophila (strain ATCC 7966 / DSM 30187 / BCRC 13018 / CCUG 14551 / JCM 1027 / KCTC 2358 / NCIMB 9240 / NCTC 8049).